Consider the following 746-residue polypeptide: MEHTYQHAWIIPFAPLPFTMSIGLGLLLVPTATKNLRRMWTFPSVSLLSIAMVFSVNLSIQQINGSSIYQHLWSWTINNDFSFEFGHLIDPLTSIMSILITTVGIMVLIYSDNYMSHDQGYLRFFAYMSFSNTSMLGLVTSSNLIQIYIFWELVGMCSYLLIGFWFTRPTAANACQKAFVTNRVGDFGLLLGILGFYWITGSFEFRDLFEIFTNLIHNNGVNSLFATLCAFLLFVGAVAKSAQFPLHVWLPDAMEGPTPISALIHAATMVAAGIFLVARLLPLFTVIPYIMNLISLIGVITLLLGATLALAQRDIKRSLAYSTMSQLGYIMLAPGIGSYRAALFHLITHAYSKALLFLGSGSIIHSMEPIVGYSPDKSQNVVLMGGLTKYLPITKTTFLLGTLSLCGIPPLACFWSKDEILNDSWLYSPIFAIIACSTAGLTAFYMVRVYLLTFDGHLHVHFQNYSGTRNSSFYSISIWGKEGTKFVNGNLPLSTLKPNKISFFSKKISNKMDGNVGNRIRSFSFRIRFDNKETFVYPHESDNTMLLPLLGLVLFTLFVGSVGIPFDQGGTEFDILSKWLNPSINLLHPNSNVSVDWYEFGTNAIYSVSIACFGIFIASLFYGSIYSSFQNLDFINSFVKKPGSKRIFLDRIINVIYNWSYNRGYIDVFYTTCFTKGIRGLAELTYLLDRRLIDGIANGIGMASFFVGEGIKYVGGGRISSYLFVYLSYVSILLLIYYFYFFSFLF.

15 helical membrane-spanning segments follow: residues 9–29 (WIIP…LLLV), 40–60 (WTFP…NLSI), 89–109 (IDPL…MVLI), 122–139 (LRFF…LGLV), 147–167 (IYIF…FWFT), 185–205 (GDFG…SFEF), 219–239 (NGVN…GAVA), 258–278 (TPIS…FLVA), 280–300 (LLPL…IGVI), 327–347 (LGYI…FHLI), 396–416 (TTFL…CFWS), 425–445 (WLYS…TAFY), 546–566 (LLPL…GIPF), 605–625 (IYSV…YGSI), and 722–742 (YLFV…FYFF).

Belongs to the complex I subunit 5 family. NDH is composed of at least 16 different subunits, 5 of which are encoded in the nucleus.

It is found in the plastid. The protein resides in the chloroplast thylakoid membrane. The enzyme catalyses a plastoquinone + NADH + (n+1) H(+)(in) = a plastoquinol + NAD(+) + n H(+)(out). It carries out the reaction a plastoquinone + NADPH + (n+1) H(+)(in) = a plastoquinol + NADP(+) + n H(+)(out). Its function is as follows. NDH shuttles electrons from NAD(P)H:plastoquinone, via FMN and iron-sulfur (Fe-S) centers, to quinones in the photosynthetic chain and possibly in a chloroplast respiratory chain. The immediate electron acceptor for the enzyme in this species is believed to be plastoquinone. Couples the redox reaction to proton translocation, and thus conserves the redox energy in a proton gradient. The chain is NAD(P)H-quinone oxidoreductase subunit 5, chloroplastic (ndhF) from Calycanthus floridus var. glaucus (Eastern sweetshrub).